The following is a 387-amino-acid chain: L-aspartate:5-guanidino-3-methyl-2-oxopentanoate transaminase (387 aa).

An N6-(pyridoxal phosphate)lysine modification is found at Lys237.

It belongs to the class-I pyridoxal-phosphate-dependent aminotransferase family. Pyridoxal 5'-phosphate serves as cofactor.

The catalysed reaction is (3R)-5-guanidino-3-methyl-2-oxopentanoate + L-aspartate = (3R)-3-methyl-L-arginine + oxaloacetate. It participates in antibiotic biosynthesis. Functionally, aminotransferase involved in the formation of the rare amino acid 3-methylarginine (MeArg), which is used as a potent antibiotic against the closely related soybean pathogen P.syringae pv. glycinea. Probably catalyzes transamination from the donor L-aspartate to 5-guanidino-3-methyl-2-oxopentanoic acid, generating 3-methylarginine. This chain is L-aspartate:5-guanidino-3-methyl-2-oxopentanoate transaminase, found in Pseudomonas syringae pv. syringae.